Reading from the N-terminus, the 1193-residue chain is Magnesium-chelatase subunit H (1193 aa).

Belongs to the Mg-chelatase subunit H family.

The catalysed reaction is protoporphyrin IX + Mg(2+) + ATP + H2O = Mg-protoporphyrin IX + ADP + phosphate + 3 H(+). Its pathway is porphyrin-containing compound metabolism; bacteriochlorophyll biosynthesis (light-independent). Involved in bacteriochlorophyll pigment biosynthesis; introduces a magnesium ion into protoporphyrin IX to yield Mg-protoroporphyrin IX. The chain is Magnesium-chelatase subunit H (bchH) from Cereibacter sphaeroides (strain ATCC 17023 / DSM 158 / JCM 6121 / CCUG 31486 / LMG 2827 / NBRC 12203 / NCIMB 8253 / ATH 2.4.1.) (Rhodobacter sphaeroides).